The following is a 942-amino-acid chain: VPS35 endosomal protein sorting factor-like (942 aa).

This sequence belongs to the VPS35L family. As to quaternary structure, component of the heterotrimeric retriever complex.

Its subcellular location is the endosome. Its function is as follows. Acts as a component of the retriever complex. The retriever complex is a heterotrimeric complex related to retromer cargo-selective complex (CSC) and essential for retromer-independent retrieval and recycling of numerous cargos. The sequence is that of VPS35 endosomal protein sorting factor-like from Drosophila melanogaster (Fruit fly).